Reading from the N-terminus, the 354-residue chain is MGCTLSAEDKAAVERSKMIDRNLREDGEKAAREVKLLLLGAGESGKSTIVKQMKIIHEAGYSEEECKQYKAVVYSNTIQSIIAIIRAMGRLKIDFGDSARADDARQLFVLAGAAEEGFMTAELAGVIKRLWKDSGVQACFNRSREYQLNDSAAYYLNDLDRIAQPNYIPTQQDVLRTRVKTTGIVETHFTFKDLHFKMFDVGGQRSERKKWIHCFEGVTAIIFCVALSDYDLVLAEDEEMNRMHESMKLFDSTCNNKWFTDTSIILFLNKKDLFEEKIKKSPLTICYPEYAGSNTYEEAAAYIQCQFEDLNKRKDTKEIYTHFTCATDTKNVQFVFDAVTDVIIKNNLKDCGLF.

Residue Gly2 is the site of N-myristoyl glycine attachment. A lipid anchor (S-palmitoyl cysteine) is attached at Cys3. Positions 32–354 (REVKLLLLGA…KNNLKDCGLF (323 aa)) constitute a G-alpha domain. The segment at 35–48 (KLLLLGAGESGKST) is G1 motif. GTP contacts are provided by residues 43–48 (ESGKST), 150–151 (DS), and 175–178 (LRTR). Residue Ser47 coordinates Mg(2+). The segment at 173–181 (DVLRTRVKT) is G2 motif. Mg(2+) is bound at residue Thr181. The segment at 196–205 (FKMFDVGGQR) is G3 motif. GTP-binding positions include 200–204 (DVGGQ), 269–272 (NKKD), and Ala326. Positions 265–272 (ILFLNKKD) are G4 motif. A G5 motif region spans residues 324–329 (TCATDT).

Belongs to the G-alpha family. G(i/o/t/z) subfamily. In terms of assembly, heterotrimeric G proteins are composed of 3 units; alpha, beta and gamma. The alpha chain contains the guanine nucleotide binding site. Part of a spindle orientation complex at least composed of GNAI1, GPSM2 and NUMA1. Identified in complex with the beta subunit GNB1 and the gamma subunit GNG1. Identified in complex with the beta subunit GNB1 and the gamma subunit GNG2. Component of the TAS2R14-GNAI1 complex, consisting of TAS2R14, GNAI1, GNB1 and GNG2; within the complex interacts with TAS2R14; this complex plays a role in the perception of bitterness. GTP binding causes dissociation of the heterotrimer, liberating the individual subunits so that they can interact with downstream effector proteins. Interacts (GDP-bound form) with GPSM1; this inhibits guanine nucleotide exchange and GTP binding. Interacts (GDP-bound form) with GPSM2 (via GoLoco domains); this inhibits guanine nucleotide exchange. Interacts with RGS10; this strongly enhances GTP hydrolysis. Interacts with RGS1 and RGS16; this strongly enhances GTPase activity. Interacts with RGS4. Interacts with RGS12. Interacts (via active GTP- or inactive GDP-bound forms) with RGS14 (via RGS and GoLoco domains). Interacts with RGS3, RGS6, RGS7, RGS8, RGS17, RGS18 and RGS20 (in vitro). Interacts (GDP-bound form) with RIC8A (via C-terminus); promoting GNAI1 folding and association with the plasma membrane. Interacts (inactive GDP-bound form) with NUCB1 (via GBA motif); the interaction leads to activation of GNAI1. Interacts (inactive GDP-bound form) with CCDC88C/DAPLE (via GBA motif); the interaction leads to activation of GNAI1. Interacts (inactive GDP-bound form) with CCDC8A/GIV (via GBA motif). Interacts with GPR15. In terms of processing, myristoylation at Gly-2 is required for membrane anchoring before palmitoylation. Palmitoylation at Cys-3 varies with membrane lipid composition.

The protein localises to the nucleus. The protein resides in the cytoplasm. Its subcellular location is the cell membrane. It localises to the cytoskeleton. It is found in the microtubule organizing center. The protein localises to the centrosome. The protein resides in the cell cortex. Its subcellular location is the membrane. Guanine nucleotide-binding proteins (G proteins) function as transducers downstream of G protein-coupled receptors (GPCRs) in numerous signaling cascades. The alpha chain contains the guanine nucleotide binding site and alternates between an active, GTP-bound state and an inactive, GDP-bound state. Signaling by an activated GPCR promotes GDP release and GTP binding. The alpha subunit has a low GTPase activity that converts bound GTP to GDP, thereby terminating the signal. Both GDP release and GTP hydrolysis are modulated by numerous regulatory proteins. Signaling is mediated via effector proteins, such as adenylate cyclase. Inhibits adenylate cyclase activity of ADCY1, ADCY5 and ADCY6, leading to decreased intracellular cAMP levels. The inactive GDP-bound form prevents the association of RGS14 with centrosomes and is required for the translocation of RGS14 from the cytoplasm to the plasma membrane. Required for normal cytokinesis during mitosis. Required for cortical dynein-dynactin complex recruitment during metaphase. The sequence is that of Guanine nucleotide-binding protein G(i) subunit alpha-1 (GNAI1) from Pongo abelii (Sumatran orangutan).